The sequence spans 1758 residues: Y' element ATP-dependent helicase YJL225C (1758 aa).

The 178-residue stretch at 668-845 (EIYMADTPSV…LQRIGLTGLA (178 aa)) folds into the Helicase ATP-binding domain. An ATP-binding site is contributed by 681–688 (APPGYGKT). A Helicase C-terminal domain is found at 900-1051 (ALKLLLALFE…EFYGLESKKG (152 aa)). The span at 1142 to 1360 (NVRTNATTNA…ATTTESTNAS (219 aa)) shows a compositional bias: low complexity. Positions 1142–1384 (NVRTNATTNA…RFHPVTDINK (243 aa)) are disordered. Residues 1361–1384 (AKEDANKDGNAEDNRFHPVTDINK) show a composition bias toward basic and acidic residues.

Belongs to the helicase family. Yeast subtelomeric Y' repeat subfamily.

Its function is as follows. Catalyzes DNA unwinding and is involved in telomerase-independent telomere maintenance. The polypeptide is Y' element ATP-dependent helicase YJL225C (Saccharomyces cerevisiae (strain ATCC 204508 / S288c) (Baker's yeast)).